Here is a 513-residue protein sequence, read N- to C-terminus: Pleiotropic regulator 1 (513 aa).

The residue at position 1 (Met1) is an N-acetylmethionine. A disordered region spans residues 60–79; it reads TSKENLKEKGPQNATDSYPH. At Ser119 the chain carries Phosphoserine. The segment at 136-160 is disordered; the sequence is VDANRTGPAGSEYRHPGASDRSQPT. Ser200 carries the post-translational modification Phosphoserine. 7 WD repeats span residues 201–240, 243–282, 285–324, 327–366, 369–409, 410–448, and 459–498; these read GHLGWVRCIAVEPGNQWFVTGSADRTIKIWDLASGKLKLS, GHISTVRGVIVSTRSPYLFSCGEDKQVKCWDLEYNKVIRH, GHLSAVYGLDLHPTLDVLVTCSRDSTARIWDVRTKASVHT, GHTNAVATVRCQAAEPQIITGSHDTTIRLWDLVAGKTRVT, NHKK…QNLS, GHNAIINTLAVNADGVLVSGADNGTMHLWDWRTGYNFQR, and DSESGIFACAFDRSESRLLTAEADKTIKVYREDETATEET. At Ser390 the chain carries Phosphoserine.

Belongs to the WD repeat PRL1/PRL2 family. Identified in the spliceosome C complex. Component of the PRP19-CDC5L splicing complex composed of a core complex comprising a homotetramer of PRPF19, CDC5L, PLRG1 and BCAS2, and at least three less stably associated proteins CTNNBL1, CWC15 and HSPA8. Interacts (via its WD40 repeat domain) directly with CDC5L (via its C-terminal); the interaction is required for mRNA splicing but not for spliceosome assembly. Component of the minor spliceosome, which splices U12-type introns. Within this complex, interacts with CRIPT. Also interacts directly in the complex with BCAS2 and PRPF19. Interacts with USB1.

The protein localises to the nucleus. It localises to the nucleus speckle. Its function is as follows. Involved in pre-mRNA splicing as component of the spliceosome. Component of the PRP19-CDC5L complex that forms an integral part of the spliceosome and is required for activating pre-mRNA splicing. As a component of the minor spliceosome, involved in the splicing of U12-type introns in pre-mRNAs. This chain is Pleiotropic regulator 1 (Plrg1), found in Mus musculus (Mouse).